Here is a 527-residue protein sequence, read N- to C-terminus: ATP-dependent RNA helicase DBP3 (527 aa).

The segment covering 1–11 (MSKDHKDKKRK) has biased composition (basic residues). The disordered stretch occupies residues 1-89 (MSKDHKDKKR…TGYSQSPALT (89 aa)). Residues 12–24 (HSDEATEEVEKKT) show a composition bias toward basic and acidic residues. Residues 25–44 (KVSKKEKKDKKEKKEKKDKK) are compositionally biased toward basic residues. The segment covering 45 to 71 (EKKDKSEKKDKSEKKEKKEKKESEDVP) has biased composition (basic and acidic residues). Over residues 72-89 (TKSSAVVSTGYSQSPALT) the composition is skewed to polar residues. The Q motif signature appears at 119-145 (LGFDQIDLDSRIASVISKFPTPTPIQA). A Helicase ATP-binding domain is found at 148 to 319 (WPYLLSGKDV…STFMNSPVKV (172 aa)). 161–168 (AETGSGKT) is an ATP binding site. The DEAD box signature appears at 266–269 (DEAD). Residues 348-497 (KLLSLLRKYQ…PVPDELLKFG (150 aa)) form the Helicase C-terminal domain.

This sequence belongs to the DEAD box helicase family. DDX5/DBP2 subfamily.

The protein localises to the nucleus. The protein resides in the nucleolus. It catalyses the reaction ATP + H2O = ADP + phosphate + H(+). Its function is as follows. ATP-dependent RNA helicase required for 60S ribosomal subunit synthesis. Involved in efficient pre-rRNA processing, predominantly at site A3, which is necessary for the normal formation of 25S and 5.8S rRNAs. This chain is ATP-dependent RNA helicase DBP3 (DBP3), found in Debaryomyces hansenii (strain ATCC 36239 / CBS 767 / BCRC 21394 / JCM 1990 / NBRC 0083 / IGC 2968) (Yeast).